Here is a 106-residue protein sequence, read N- to C-terminus: UPF0145 protein (106 aa).

This sequence belongs to the UPF0145 family.

This is UPF0145 protein from Listeria grayi (Listeria murrayi).